A 625-amino-acid polypeptide reads, in one-letter code: Alpha-amylase 1 (625 aa).

The N-terminal stretch at 1-22 (MGFSKIALFSLFALFGLPTSLA) is a signal peptide. Cysteines 51 and 59 form a disulfide. Residue W105 participates in substrate binding. Residue N143 coordinates Ca(2+). N-linked (GlcNAc...) asparagine glycans are attached at residues N153, N163, and N180. A disulfide bridge connects residues C172 and C187. Ca(2+) is bound by residues E185 and D198. R227 serves as a coordination point for substrate. D229 serves as a coordination point for Ca(2+). D229 functions as the Nucleophile in the catalytic mechanism. 232–233 (KQ) serves as a coordination point for substrate. An N-linked (GlcNAc...) asparagine glycan is attached at N241. E253 is a binding site for Ca(2+). The active-site Proton donor is the E253. Residues N260 and N286 are each glycosylated (N-linked (GlcNAc...) asparagine). A disulfide bridge connects residues C263 and C306. Residue D322 coordinates substrate. N-linked (GlcNAc...) asparagine glycosylation is present at N331. R370 contributes to the substrate binding site. N440 and N461 each carry an N-linked (GlcNAc...) asparagine glycan. The segment at 526-579 (SATSSSKSSSSSSSRSGSSSSSSSRSGSTSSSGSSHTITSTSQSVHTSGSSTST) is disordered. S603 is lipidated: GPI-anchor amidated serine. Positions 604-625 (SANAVRVSILGVAAFIAIVLFI) are cleaved as a propeptide — removed in mature form.

This sequence belongs to the glycosyl hydrolase 13 family. It depends on Ca(2+) as a cofactor.

Its subcellular location is the cell membrane. It carries out the reaction Endohydrolysis of (1-&gt;4)-alpha-D-glucosidic linkages in polysaccharides containing three or more (1-&gt;4)-alpha-linked D-glucose units.. In Schizosaccharomyces pombe (strain 972 / ATCC 24843) (Fission yeast), this protein is Alpha-amylase 1 (aah1).